Here is a 474-residue protein sequence, read N- to C-terminus: CUGBP Elav-like family member 4 (474 aa).

Positions 1–287 (MYIKMATLAN…AAFAAAQMQQ (287 aa)) are sufficient for RNA-binding and MSE-dependent splicing activity. The segment covering 18 to 28 (LSTNGLGSSPG) has biased composition (polar residues). Residues 18–41 (LSTNGLGSSPGSAGHMNGLSHSPG) form a disordered region. 2 consecutive RRM domains span residues 54–135 (IKLF…PADS) and 141–221 (RKLF…FADT). The tract at residues 228–247 (RRMQQMAGQMGMFNPMAIPF) is necessary for TNNT2 exon 5 inclusion. The region spanning 392–467 (PQPPPMIPQQ…KRLKVQLKRP (76 aa)) is the RRM 3 domain.

This sequence belongs to the CELF/BRUNOL family.

It is found in the nucleus. Its subcellular location is the cytoplasm. In terms of biological role, RNA-binding protein implicated in the regulation of pre-mRNA alternative splicing. Mediates exon inclusion and/or exclusion in pre-mRNA that are subject to tissue-specific and developmentally regulated alternative splicing. Specifically activates exon 5 inclusion of cardiac isoforms of TNNT2 during heart remodeling at the juvenile to adult transition. Promotes exclusion of both the smooth muscle (SM) and non-muscle (NM) exons in actinin pre-mRNAs. Activates the splicing of MAPT/Tau exon 10. Binds to muscle-specific splicing enhancer (MSE) intronic sites flanking the alternative exon 5 of TNNT2 pre-mRNA. The polypeptide is CUGBP Elav-like family member 4 (CELF4) (Macaca fascicularis (Crab-eating macaque)).